A 253-amino-acid chain; its full sequence is 5-oxoprolinase subunit A (253 aa).

It belongs to the LamB/PxpA family. In terms of assembly, forms a complex composed of PxpA, PxpB and PxpC.

It carries out the reaction 5-oxo-L-proline + ATP + 2 H2O = L-glutamate + ADP + phosphate + H(+). Functionally, catalyzes the cleavage of 5-oxoproline to form L-glutamate coupled to the hydrolysis of ATP to ADP and inorganic phosphate. The protein is 5-oxoprolinase subunit A of Bacillus cereus (strain ATCC 14579 / DSM 31 / CCUG 7414 / JCM 2152 / NBRC 15305 / NCIMB 9373 / NCTC 2599 / NRRL B-3711).